A 406-amino-acid chain; its full sequence is Succinyl-diaminopimelate desuccinylase (406 aa).

H95 contributes to the Zn(2+) binding site. D97 is a catalytic residue. Residue D128 participates in Zn(2+) binding. E162 acts as the Proton acceptor in catalysis. The Zn(2+) site is built by E163, E191, and H377.

Belongs to the peptidase M20A family. DapE subfamily. As to quaternary structure, homodimer. Requires Zn(2+) as cofactor. Co(2+) serves as cofactor.

It catalyses the reaction N-succinyl-(2S,6S)-2,6-diaminopimelate + H2O = (2S,6S)-2,6-diaminopimelate + succinate. It participates in amino-acid biosynthesis; L-lysine biosynthesis via DAP pathway; LL-2,6-diaminopimelate from (S)-tetrahydrodipicolinate (succinylase route): step 3/3. Functionally, catalyzes the hydrolysis of N-succinyl-L,L-diaminopimelic acid (SDAP), forming succinate and LL-2,6-diaminopimelate (DAP), an intermediate involved in the bacterial biosynthesis of lysine and meso-diaminopimelic acid, an essential component of bacterial cell walls. The chain is Succinyl-diaminopimelate desuccinylase from Polaromonas naphthalenivorans (strain CJ2).